Consider the following 194-residue polypeptide: Translation machinery-associated protein 22 (194 aa).

An SUI1 domain is found at 102-173 (VQIKRVERNK…DVQEWLLELY (72 aa)).

This sequence belongs to the DENR family. In terms of assembly, interacts with the 40S ribosomal subunit.

The protein resides in the cytoplasm. This chain is Translation machinery-associated protein 22 (tma22), found in Neosartorya fischeri (strain ATCC 1020 / DSM 3700 / CBS 544.65 / FGSC A1164 / JCM 1740 / NRRL 181 / WB 181) (Aspergillus fischerianus).